Consider the following 419-residue polypeptide: Acetyltransferase fsoF (419 aa).

N2 is a glycosylation site (N-linked (GlcNAc...) asparagine). 2 consecutive transmembrane segments (helical) span residues 4-24 (TIIS…VVGF) and 62-82 (AFLG…AILS). The tract at residues 89-114 (QSPTSSLGGLIPPTTRDTPKTQNNAT) is disordered. 2 N-linked (GlcNAc...) asparagine glycosylation sites follow: N112 and N169. 4 consecutive transmembrane segments (helical) span residues 230–250 (YWAI…VVAV), 314–334 (YVFM…SDVS), 337–357 (IPLG…GIML), and 386–406 (VSGP…WIYM).

It belongs to the wax synthase family.

The protein resides in the membrane. It catalyses the reaction 3-O-(beta-D-glucopyranosyl)-2alpha-hydroxyisomotiol + acetyl-CoA = 3-O-(beta-D-glucopyranosyl)-2alpha-acetoxyisomotiol + CoA. The catalysed reaction is 2-deacetylfuscoatroside + acetyl-CoA = fuscoatroside + CoA. It participates in secondary metabolite biosynthesis; terpenoid biosynthesis. Terpene cyclase-glycosyl transferase fusion protein; part of the gene cluster that mediates the biosynthesis of the enfumafungin-type antibiotic, fuscoatroside. Within the pathway, fsoF catalyzes the acetylation of C2-alpha-OH following the C2 hydroxylation by the cytochrome monooxygenase fsoD. The fuscoatroside biosynthesis is initiated by the cyclization of 2,3(S)-oxidosqualene through FsoA's terpene cyclase (TC) domain, leading to the formation of the fernane skeleton isomotiol, harboring a fernane triterpene skeleton with a C8-C9 double bond. Subsequently, C2-alpha-hydroxylation mediated by fsoD results in the production of 2-alpha-hydroxy-isomotiol, which is further acetylated by fsoF. The glycosyltransferase (GT) domain of FsoA may convert isomotiol, 2-alpha-hydroxy-isomotiol, and the acetylated derivative of 2-alpha-hydroxy-isomotiol into their corresponding glycosides 3-O-(beta-D-glucopyranosyl)-isomotiol, 3-O-(beta-D-glucopyranosyl)-2-alpha-hydroxy-isomotiol, and 3-O-(beta-D-glucopyranosyl)-2-alpha-acetoxy-isomotiol, which then undergo oxidative cleavage under the action of fsoE to form s 2-deacetoxy-fuscoatroside, 2-deacetyl-fuscoatroside, and fuscoatroside, respectively. Although hydroxylation followed by acetylation of 3-O-(beta-D-glucopyranosyl)-isomotiol and 2-deacetoxy-fuscoatroside by fsoD and fsoF could not be ruled out, this process is likely to occur with difficulty due to bulky steric hindrance caused by the presence of a glycan at C3 in these compounds. Interestingly, fsoE can also utilize the aglycones isomotiol and 2-alpha-hydroxy-isomotiol as substrates to generate 19-beta-hydroxy-isomotiol and 2-alpha,19-beta-dihydroxy-isomotiol, respectively. These reactions occur with lower efficiency. Finally, fsoE can further convert 2-alpha,19-beta-dihydroxy-isomotiol into 2-alpha-hydroxy-ismotiol-19-one and 2-alpha-hydroxy-ismotiol-19-one into 2-deacetyl-3-deglucopyranosyl-fuscoatroside. This is Acetyltransferase fsoF from Humicola fuscoatra.